The following is a 168-amino-acid chain: Iron-sulfur cluster assembly enzyme ISCU (168 aa).

The transit peptide at 1–35 (MAAATGAGRLRRAASALLLRSPRLPARELSAPARL) directs the protein to the mitochondrion. At S15 the chain carries Phosphoserine. C70 serves as the catalytic Cysteine persulfide intermediate. The residue at position 70 (C70) is a Cysteine persulfide. Zn(2+) contacts are provided by D72, C96, and C139. Residue C139 is the Cysteine persulfide intermediate of the active site. C139 carries the cysteine persulfide modification.

It belongs to the NifU family. Homodimer; Tyr-36-mediated dimerization of two iron- and sulfide-containing ISCU subunit bind to the cysteine desulfurase complex. Component of the mitochondrial core iron-sulfur cluster (ISC) complex composed of NFS1, LYRM4, NDUFAB1, ISCU, FXN, and FDX2; this complex is a heterohexamer containing two copies of each monomer. Interacts (D-state) with NFS1 (homodimer form); each monomer interacts with the C-terminal regions of each NFS1 monomer. Interacts (monomer form) with FXN (via ferrous form); the interaction is possible when both are bound to the dimeric form of the cysteine desulfurase complex (NFS1:LYRM4) and enhances FXN interaction to the dimeric form of the cysteine desulfurase complex (NFS1:LYRM4). Interacts with GLRX5. Interacts (D-state) with HSPA9. Interacts (S-state) with HSCB; this interaction stimulates the ATPase activity of HSPA9. Component of a complex composed of FXN, NFS1, LYRM4 and ISCU. In terms of processing, cysteine persulfide is reduced by thiol-containing molecules such as glutathione and L-cysteine. Phosphorylation at Ser-15 is required for ISCU protein stabilization in the cytosol, whereas dephosphorylation of Ser-15, due to the inhibition of mTORC1 (mammalian target of rapamycin complex 1) complex, leads to degradation of the precursor form and ultimately to a decrease in the mitochondrial mature form.

Its subcellular location is the mitochondrion. Functionally, mitochondrial scaffold protein, of the core iron-sulfur cluster (ISC) assembly complex, that provides the structural architecture on which the [2Fe-2S] clusters are assembled. The core iron-sulfur cluster (ISC) assembly complex is involved in the de novo synthesis of a [2Fe-2S] cluster, the first step of the mitochondrial iron-sulfur protein biogenesis. This process is initiated by the cysteine desulfurase complex (NFS1:LYRM4:NDUFAB1) that produces persulfide which is delivered on the scaffold protein ISCU in a FXN-dependent manner. Then this complex is stabilized by FDX2 which provides reducing equivalents to accomplish the [2Fe-2S] cluster assembly. Finally, the [2Fe-2S] cluster is transferred from ISCU to chaperone proteins, including HSCB, HSPA9 and GLRX5. Exists as two slow interchanging conformational states, a structured (S) and disordered (D) form. May modulate NFS1 desulfurase activity in a zinc-dependent manner. Modulates the interaction between FXN and the cysteine desulfurase complex. The sequence is that of Iron-sulfur cluster assembly enzyme ISCU from Mus musculus (Mouse).